Here is a 349-residue protein sequence, read N- to C-terminus: tRNA pseudouridine synthase D (349 aa).

Phe-27 lines the substrate pocket. Asp-80 (nucleophile) is an active-site residue. Asn-129 is a binding site for substrate. One can recognise a TRUD domain in the interval 155–303; the sequence is GVPNYFGAQR…VEAARRAMLL (149 aa). Phe-329 serves as a coordination point for substrate.

Belongs to the pseudouridine synthase TruD family.

It catalyses the reaction uridine(13) in tRNA = pseudouridine(13) in tRNA. Functionally, responsible for synthesis of pseudouridine from uracil-13 in transfer RNAs. In Shigella boydii serotype 4 (strain Sb227), this protein is tRNA pseudouridine synthase D.